The following is a 25-amino-acid chain: Histone H1.1 (25 aa).

The 25-residue stretch at 1 to 25 (MVSEAIAALKEREGSSEFAIGKKKE) folds into the H15 domain. Residues 1–25 (MVSEAIAALKEREGSSEFAIGKKKE) are disordered. Positions 9 to 25 (LKEREGSSEFAIGKKKE) are enriched in basic and acidic residues.

The protein localises to the nucleus. It localises to the chromosome. Histones H1 are necessary for the condensation of nucleosome chains into higher-order structures. This chain is Histone H1.1, found in Triticum aestivum (Wheat).